A 312-amino-acid polypeptide reads, in one-letter code: Protoheme IX farnesyltransferase (312 aa).

9 consecutive transmembrane segments (helical) span residues 29–49, 50–70, 90–110, 117–137, 150–170, 177–197, 223–243, 246–266, and 292–312; these read VMSL…GHMN, PVLA…SGAL, IPAG…LSAF, LMVN…YAVI, IVIG…AATG, LVLF…LSLF, ALFY…MGFA, FYGV…WRLW, and IFAV…FGVF.

The protein belongs to the UbiA prenyltransferase family. Protoheme IX farnesyltransferase subfamily.

It localises to the cell inner membrane. The enzyme catalyses heme b + (2E,6E)-farnesyl diphosphate + H2O = Fe(II)-heme o + diphosphate. Its pathway is porphyrin-containing compound metabolism; heme O biosynthesis; heme O from protoheme: step 1/1. Functionally, converts heme B (protoheme IX) to heme O by substitution of the vinyl group on carbon 2 of heme B porphyrin ring with a hydroxyethyl farnesyl side group. This is Protoheme IX farnesyltransferase from Brucella melitensis biotype 1 (strain ATCC 23456 / CCUG 17765 / NCTC 10094 / 16M).